A 72-amino-acid chain; its full sequence is uncharacterized protein (72 aa).

This is an uncharacterized protein from Dictyostelium discoideum (Social amoeba).